A 137-amino-acid polypeptide reads, in one-letter code: MEVNYFNQYKEETTQFEVILETVFKDIKEEKSMQVIFVDNDQIRDINKMYRNIDKPTDVISFPNDDEKDDSLGDIFISIDQAKIQALDYGHTLEREIGFLAVHGYLHLLGYDHHTEAEEKEMFTLQEEILNKANLKR.

Residues H103, H107, and H113 each contribute to the Zn(2+) site.

It belongs to the endoribonuclease YbeY family. Requires Zn(2+) as cofactor.

The protein resides in the cytoplasm. In terms of biological role, single strand-specific metallo-endoribonuclease involved in late-stage 70S ribosome quality control and in maturation of the 3' terminus of the 16S rRNA. The sequence is that of Endoribonuclease YbeY from Acholeplasma laidlawii (strain PG-8A).